A 992-amino-acid chain; its full sequence is Probable translation initiation factor IF-2 (992 aa).

Residues 96-220 (KNWHGVTVTP…LSLALLRFGI (125 aa)) form the DOD-type homing endonuclease domain. The region spanning 399 to 616 (TTETHNFIAN…LIAGLSQRYL (218 aa)) is the tr-type G domain. Residues 472–476 (DTPGH) and 526–529 (NKID) each bind GTP.

This sequence belongs to the TRAFAC class translation factor GTPase superfamily. Classic translation factor GTPase family. IF-2 subfamily. In terms of processing, this protein undergoes a protein self splicing that involves a post-translational excision of the intervening region (intein) followed by peptide ligation.

Functionally, function in general translation initiation by promoting the binding of the formylmethionine-tRNA to ribosomes. Seems to function along with eIF-2. The protein is Probable translation initiation factor IF-2 (infB) of Pyrococcus abyssi (strain GE5 / Orsay).